We begin with the raw amino-acid sequence, 32 residues long: Calcitonin (32 aa).

A disulfide bond links C1 and C7. A Proline amide modification is found at P32.

Belongs to the calcitonin family.

It is found in the secreted. In terms of biological role, causes a rapid but short-lived drop in the level of calcium and phosphate in blood by promoting the incorporation of those ions in the bones. In Aquarana catesbeiana (American bullfrog), this protein is Calcitonin.